The primary structure comprises 82 residues: ATP synthase subunit c (82 aa).

2 consecutive transmembrane segments (helical) span residues 5-25 and 55-75; these read MSLV…FGAI and FLII…VIAF.

Belongs to the ATPase C chain family. In terms of assembly, F-type ATPases have 2 components, F(1) - the catalytic core - and F(0) - the membrane proton channel. F(1) has five subunits: alpha(3), beta(3), gamma(1), delta(1), epsilon(1). F(0) has three main subunits: a(1), b(2) and c(10-14). The alpha and beta chains form an alternating ring which encloses part of the gamma chain. F(1) is attached to F(0) by a central stalk formed by the gamma and epsilon chains, while a peripheral stalk is formed by the delta and b chains.

It is found in the cell membrane. F(1)F(0) ATP synthase produces ATP from ADP in the presence of a proton or sodium gradient. F-type ATPases consist of two structural domains, F(1) containing the extramembraneous catalytic core and F(0) containing the membrane proton channel, linked together by a central stalk and a peripheral stalk. During catalysis, ATP synthesis in the catalytic domain of F(1) is coupled via a rotary mechanism of the central stalk subunits to proton translocation. Functionally, key component of the F(0) channel; it plays a direct role in translocation across the membrane. A homomeric c-ring of between 10-14 subunits forms the central stalk rotor element with the F(1) delta and epsilon subunits. The protein is ATP synthase subunit c of Carboxydothermus hydrogenoformans (strain ATCC BAA-161 / DSM 6008 / Z-2901).